The primary structure comprises 505 residues: Lysine--tRNA ligase (505 aa).

Mg(2+) is bound by residues glutamate 403 and glutamate 410.

It belongs to the class-II aminoacyl-tRNA synthetase family. As to quaternary structure, homodimer. Mg(2+) is required as a cofactor.

The protein resides in the cytoplasm. It catalyses the reaction tRNA(Lys) + L-lysine + ATP = L-lysyl-tRNA(Lys) + AMP + diphosphate. This chain is Lysine--tRNA ligase, found in Methanospirillum hungatei JF-1 (strain ATCC 27890 / DSM 864 / NBRC 100397 / JF-1).